The following is a 144-amino-acid chain: Ribonuclease P protein subunit RPR2 (144 aa).

The tract at residues 1-22 is disordered; sequence MGKKAHGGKMKPEIDENGTLLV. Residues Cys90, Cys93, Cys115, and Cys117 each contribute to the Zn(2+) site.

Belongs to the eukaryotic/archaeal RNase P protein component 4 family. Component of nuclear RNase P. RNase P consists of an RNA moiety and at least 9 protein subunits including POP1, POP3, POP4, POP5, POP6, POP7, POP8, RPP1 and RPR2, many of which are shared with the RNase MPR complex. Requires Zn(2+) as cofactor.

It is found in the nucleus. It catalyses the reaction Endonucleolytic cleavage of RNA, removing 5'-extranucleotides from tRNA precursor.. Component of ribonuclease P, a protein complex that generates mature tRNA molecules by cleaving their 5'-ends. This is Ribonuclease P protein subunit RPR2 (RPR2) from Saccharomyces cerevisiae (strain ATCC 204508 / S288c) (Baker's yeast).